Here is a 228-residue protein sequence, read N- to C-terminus: MMNDMRNDDPNFNVMGNFDHGLTLALSKGRILKETLPLLEAAGINLLEDPEKSRKLIFPTTHQKVRILILRASDVPTYVENGAADFGVAGKDVLMEHGAQHVYELLDLKIANCKLMTAGKVGMQHPKGRLKIATKYVNLTRQYYASLGEQVDVIKLYGSMELAPLVGLGDYIVDVVDTGNTLRANGLEPLEEIMKVSSRLIVNKASFKRKQALLDPILAQVEEAVNQR.

Belongs to the ATP phosphoribosyltransferase family. Short subfamily. In terms of assembly, heteromultimer composed of HisG and HisZ subunits.

It localises to the cytoplasm. The catalysed reaction is 1-(5-phospho-beta-D-ribosyl)-ATP + diphosphate = 5-phospho-alpha-D-ribose 1-diphosphate + ATP. It participates in amino-acid biosynthesis; L-histidine biosynthesis; L-histidine from 5-phospho-alpha-D-ribose 1-diphosphate: step 1/9. In terms of biological role, catalyzes the condensation of ATP and 5-phosphoribose 1-diphosphate to form N'-(5'-phosphoribosyl)-ATP (PR-ATP). Has a crucial role in the pathway because the rate of histidine biosynthesis seems to be controlled primarily by regulation of HisG enzymatic activity. This Acinetobacter baylyi (strain ATCC 33305 / BD413 / ADP1) protein is ATP phosphoribosyltransferase.